The primary structure comprises 795 residues: Protocadherin beta-12 (795 aa).

Positions 1-26 are cleaved as a signal peptide; it reads MENGGAGTLQIRQVLLFFVLLGMSQA. Over 27–690 the chain is Extracellular; sequence GSETGNFLVM…AQADSLTVYL (664 aa). 5 Cadherin domains span residues 35-133, 138-242, 247-347, 352-451, and 456-561; these read VMEE…SPVF, MLLE…SPEF, YEVK…APEI, ITSP…APAF, and YALF…SPFV. Residues N418, N436, N487, and N567 are each glycosylated (N-linked (GlcNAc...) asparagine). Residues 568–671 form the Cadherin 6 domain; the sequence is GSAPCTELVP…LVDGFSQPYL (104 aa). The helical transmembrane segment at 691-711 threads the bilayer; the sequence is VVALASVSSLFLFSVLLFVAV. Topologically, residues 712 to 795 are cytoplasmic; that stretch reads RLCRRSRAAP…NPPFQNNLGF (84 aa).

The protein resides in the cell membrane. Potential calcium-dependent cell-adhesion protein. May be involved in the establishment and maintenance of specific neuronal connections in the brain. This chain is Protocadherin beta-12 (PCDHB12), found in Homo sapiens (Human).